The sequence spans 143 residues: Small ribosomal subunit protein uS12B (143 aa).

3,4-dihydroxyproline is present on P62.

Belongs to the universal ribosomal protein uS12 family. As to quaternary structure, component of the small ribosomal subunit (SSU). Mature yeast ribosomes consist of a small (40S) and a large (60S) subunit. The 40S small subunit contains 1 molecule of ribosomal RNA (18S rRNA) and at least 33 different proteins. The large 60S subunit contains 3 rRNA molecules (25S, 5.8S and 5S rRNA) and at least 46 different proteins. In terms of processing, hydroxylation at Pro-62 affects translation termination efficiency.

Its subcellular location is the cytoplasm. It is found in the nucleus. It localises to the nucleolus. In terms of biological role, component of the ribosome, a large ribonucleoprotein complex responsible for the synthesis of proteins in the cell. The small ribosomal subunit (SSU) binds messenger RNAs (mRNAs) and translates the encoded message by selecting cognate aminoacyl-transfer RNA (tRNA) molecules. The large subunit (LSU) contains the ribosomal catalytic site termed the peptidyl transferase center (PTC), which catalyzes the formation of peptide bonds, thereby polymerizing the amino acids delivered by tRNAs into a polypeptide chain. The nascent polypeptides leave the ribosome through a tunnel in the LSU and interact with protein factors that function in enzymatic processing, targeting, and the membrane insertion of nascent chains at the exit of the ribosomal tunnel. This is Small ribosomal subunit protein uS12B (rps2302) from Schizosaccharomyces pombe (strain 972 / ATCC 24843) (Fission yeast).